A 169-amino-acid polypeptide reads, in one-letter code: MMQDLEILDIVDESDCVIGQKKRSEIYSQGLCNFRVVNSFVVNSLGKLWIPRRSAQKRIFPLCLDVSMGGHVESGETYEDALQRELEEELNLDLNMVNTQLLGYLTPYKYQVSAFMKVYEIRLDYEPDYNQNDFIESFWLYPSELIEWLNKGEPAKSDLIKLVQMFYAN.

A Nudix hydrolase domain is found at 32–162; sequence CNFRVVNSFV…EPAKSDLIKL (131 aa). Residues 69-91 carry the Nudix box motif; sequence GGHVESGETYEDALQRELEEELN. Residues E85 and E89 each coordinate Mg(2+).

Belongs to the Nudix hydrolase family. Mg(2+) is required as a cofactor.

This is an uncharacterized protein from Nostoc sp. (strain PCC 7120 / SAG 25.82 / UTEX 2576).